The following is a 676-amino-acid chain: Transketolase 7 (676 aa).

His36 is a substrate binding site. Thiamine diphosphate-binding positions include His76 and Gly125–Leu127. A Mg(2+)-binding site is contributed by Asp166. Thiamine diphosphate is bound by residues Gly167 and Asn196. Asn196 and Ile198 together coordinate Mg(2+). Residues His273, Arg367, and Ser394 each coordinate substrate. A thiamine diphosphate-binding site is contributed by His273. Residues Glu421 and Phe448 each coordinate thiamine diphosphate. Glu421 (proton donor) is an active-site residue. The substrate site is built by His472, Asp480, and Arg531.

This sequence belongs to the transketolase family. In terms of assembly, homodimer. Mg(2+) is required as a cofactor. Requires Ca(2+) as cofactor. Mn(2+) serves as cofactor. It depends on Co(2+) as a cofactor. The cofactor is thiamine diphosphate. Leaves and roots.

It carries out the reaction D-sedoheptulose 7-phosphate + D-glyceraldehyde 3-phosphate = aldehydo-D-ribose 5-phosphate + D-xylulose 5-phosphate. Could be involved in the conversion of sugars, which are a major phenomenon in the rehydration process. Functionally, catalyzes the transfer of a two-carbon ketol group from a ketose donor to an aldose acceptor, via a covalent intermediate with the cofactor thiamine pyrophosphate. The protein is Transketolase 7 (TKT7) of Craterostigma plantagineum (Blue gem).